We begin with the raw amino-acid sequence, 325 residues long: Acetyl-coenzyme A carboxylase carboxyl transferase subunit alpha (325 aa).

In terms of domain architecture, CoA carboxyltransferase C-terminal spans 35–292 (EIEKLEARLA…DRVLRRSLKQ (258 aa)).

The protein belongs to the AccA family. As to quaternary structure, acetyl-CoA carboxylase is a heterohexamer composed of biotin carboxyl carrier protein (AccB), biotin carboxylase (AccC) and two subunits each of ACCase subunit alpha (AccA) and ACCase subunit beta (AccD).

The protein resides in the cytoplasm. It catalyses the reaction N(6)-carboxybiotinyl-L-lysyl-[protein] + acetyl-CoA = N(6)-biotinyl-L-lysyl-[protein] + malonyl-CoA. It functions in the pathway lipid metabolism; malonyl-CoA biosynthesis; malonyl-CoA from acetyl-CoA: step 1/1. Its function is as follows. Component of the acetyl coenzyme A carboxylase (ACC) complex. First, biotin carboxylase catalyzes the carboxylation of biotin on its carrier protein (BCCP) and then the CO(2) group is transferred by the carboxyltransferase to acetyl-CoA to form malonyl-CoA. This chain is Acetyl-coenzyme A carboxylase carboxyl transferase subunit alpha, found in Geobacillus kaustophilus (strain HTA426).